Here is a 152-residue protein sequence, read N- to C-terminus: UPF0225 protein YchJ (152 aa).

Belongs to the UPF0225 family.

This is UPF0225 protein YchJ from Escherichia coli O139:H28 (strain E24377A / ETEC).